Here is a 248-residue protein sequence, read N- to C-terminus: tRNA (guanine-N(1)-)-methyltransferase (248 aa).

Residues glycine 113 and 133 to 138 contribute to the S-adenosyl-L-methionine site; that span reads IGDYVL. The tract at residues 226 to 248 is disordered; it reads ARPAQTIRAKGESQKTPKNKTDG. Positions 234 to 248 are enriched in basic and acidic residues; it reads AKGESQKTPKNKTDG.

This sequence belongs to the RNA methyltransferase TrmD family. As to quaternary structure, homodimer.

It is found in the cytoplasm. The enzyme catalyses guanosine(37) in tRNA + S-adenosyl-L-methionine = N(1)-methylguanosine(37) in tRNA + S-adenosyl-L-homocysteine + H(+). Specifically methylates guanosine-37 in various tRNAs. The protein is tRNA (guanine-N(1)-)-methyltransferase of Rhodopseudomonas palustris (strain ATCC BAA-98 / CGA009).